A 211-amino-acid polypeptide reads, in one-letter code: Ribonuclease HII (211 aa).

The 188-residue stretch at 24–211 (QLIAGVDEVG…KPVKKALGLD (188 aa)) folds into the RNase H type-2 domain. D30, E31, and D122 together coordinate a divalent metal cation.

The protein belongs to the RNase HII family. The cofactor is Mn(2+). Mg(2+) is required as a cofactor.

The protein resides in the cytoplasm. It catalyses the reaction Endonucleolytic cleavage to 5'-phosphomonoester.. Endonuclease that specifically degrades the RNA of RNA-DNA hybrids. This Vibrio parahaemolyticus serotype O3:K6 (strain RIMD 2210633) protein is Ribonuclease HII.